A 293-amino-acid polypeptide reads, in one-letter code: C-type lectin domain family 4 member G (293 aa).

Over 1–31 (MDTTRYSKWGGSSEEVPGGPWGRWVHWSRRP) the chain is Cytoplasmic. A Phosphoserine modification is found at S12. The chain crosses the membrane as a helical; Signal-anchor for type II membrane protein span at residues 32-52 (LFLALAVLVTTVLWAVILSIL). Residues 53–293 (LSKASTERAA…GWICEKRHNC (241 aa)) lie on the Extracellular side of the membrane. An N-linked (GlcNAc...) asparagine glycan is attached at N73. Residues 96–136 (SGTQAQLQTTRAELGEAQAKLMEQESALRELRERVTQGLAE) are a coiled coil. N159 carries an N-linked (GlcNAc...) asparagine glycan. A C-type lectin domain is found at 172 to 287 (FEGSCYFFSV…CDSEKDGWIC (116 aa)). A disulfide bridge connects residues C264 and C278.

(Microbial infection) Interacts with Japanese encephalitis virus envelope protein E. As to quaternary structure, (Microbial infection) Interacts with ebolavirus glycoprotein. In terms of assembly, (Microbial infection) Interacts with SARS-CoV spike glycoprotein. (Microbial infection) Interacts with lassa virus and Lymphocytic choriomeningitis virus glycoprotein. As to expression, expressed exclusively in fetal and adult liver and in lymph nodes. Specifically expressed by endothelial cells lining lymph node and liver sinuses (at protein level).

The protein localises to the cell membrane. In terms of biological role, binds mannose, N-acetylglucosamine (GlcNAc) and fucose, but not galactose, in a Ca(2+)-dependent manner, in vitro. Functionally, (Microbial infection) Acts as a receptor for Japanese encephalitis virus. (Microbial infection) Acts as a receptor for Ebolavirus. Its function is as follows. (Microbial infection) Acts as a receptor for SARS-CoV. In terms of biological role, (Microbial infection) Acts as a receptor for Lassa virus and Lymphocytic choriomeningitis virus glycoprotein. In Homo sapiens (Human), this protein is C-type lectin domain family 4 member G (CLEC4G).